A 752-amino-acid polypeptide reads, in one-letter code: Cation-transporting P-type ATPase B (752 aa).

The region spanning 15 to 78 (RRIRLDVLGM…VVEKAGYHAA (64 aa)) is the HMA domain. A metal cation contacts are provided by Cys-26 and Cys-29. 6 helical membrane passes run 105-125 (LLVAAVLFVPLADLSTLFAIV), 132-152 (GWGYILTALAAPVVTWAAWPF), 167-187 (METLISVGIVAATAWSLSSVF), 201-221 (AILNSDSIYLEVAAGVTVFVL), 361-381 (IAGVFVPVVFVIAGLAGAAWL), and 390-410 (AFSVTLGVLVIACPCALGLAT). The 4-aspartylphosphate intermediate role is filled by Asp-446. 2 consecutive transmembrane segments (helical) span residues 491-511 (MAAAIVAASPDPGPVNGFVAV) and 714-734 (AIPIAAAGLLNPLIAGAAMAF).

This sequence belongs to the cation transport ATPase (P-type) (TC 3.A.3) family. Type IB subfamily.

The protein resides in the cell membrane. It catalyses the reaction ATP + H2O = ADP + phosphate + H(+). The polypeptide is Cation-transporting P-type ATPase B (ctpB) (Mycobacterium tuberculosis (strain ATCC 25618 / H37Rv)).